A 472-amino-acid chain; its full sequence is 3-isopropylmalate dehydratase large subunit (472 aa).

[4Fe-4S] cluster is bound by residues C353, C414, and C417.

The protein belongs to the aconitase/IPM isomerase family. LeuC type 1 subfamily. Heterodimer of LeuC and LeuD. The cofactor is [4Fe-4S] cluster.

It carries out the reaction (2R,3S)-3-isopropylmalate = (2S)-2-isopropylmalate. Its pathway is amino-acid biosynthesis; L-leucine biosynthesis; L-leucine from 3-methyl-2-oxobutanoate: step 2/4. Functionally, catalyzes the isomerization between 2-isopropylmalate and 3-isopropylmalate, via the formation of 2-isopropylmaleate. The sequence is that of 3-isopropylmalate dehydratase large subunit from Acinetobacter baumannii (strain AB307-0294).